The primary structure comprises 300 residues: 33 kDa chaperonin (300 aa).

2 disulfides stabilise this stretch: Cys235–Cys237 and Cys269–Cys272.

It belongs to the HSP33 family. In terms of processing, under oxidizing conditions two disulfide bonds are formed involving the reactive cysteines. Under reducing conditions zinc is bound to the reactive cysteines and the protein is inactive.

It localises to the cytoplasm. Functionally, redox regulated molecular chaperone. Protects both thermally unfolding and oxidatively damaged proteins from irreversible aggregation. Plays an important role in the bacterial defense system toward oxidative stress. This is 33 kDa chaperonin from Pseudomonas fluorescens (strain ATCC BAA-477 / NRRL B-23932 / Pf-5).